The chain runs to 353 residues: Methylthioribose-1-phosphate isomerase (353 aa).

Substrate contacts are provided by residues 51–53 (RGA), Arg94, and Gln199. Asp240 serves as the catalytic Proton donor. Residue 250-251 (NK) coordinates substrate.

The protein belongs to the eIF-2B alpha/beta/delta subunits family. MtnA subfamily. Homodimer.

The catalysed reaction is 5-(methylsulfanyl)-alpha-D-ribose 1-phosphate = 5-(methylsulfanyl)-D-ribulose 1-phosphate. It participates in amino-acid biosynthesis; L-methionine biosynthesis via salvage pathway; L-methionine from S-methyl-5-thio-alpha-D-ribose 1-phosphate: step 1/6. In terms of biological role, catalyzes the interconversion of methylthioribose-1-phosphate (MTR-1-P) into methylthioribulose-1-phosphate (MTRu-1-P). The protein is Methylthioribose-1-phosphate isomerase of Bacillus pumilus (strain SAFR-032).